The sequence spans 379 residues: Transcription factor bHLH122 (379 aa).

Over residues 1–17 (MESEFQQHHFLLHDHQH) the composition is skewed to basic and acidic residues. Positions 1–21 (MESEFQQHHFLLHDHQHQRPR) are disordered. Residue Ser74 is modified to Phosphoserine. Disordered regions lie at residues 79–98 (TFNSDGTEKKPPEVKTEDED), 133–156 (SVSRNKRPREKDDRTPVNNLARHN), and 190–286 (TSNT…MSLP). A compositionally biased stretch (basic and acidic residues) spans 84 to 93 (GTEKKPPEVK). The span at 190 to 200 (TSNTEASSLTP) shows a compositional bias: polar residues. Phosphoserine occurs at positions 213 and 234. The span at 235-261 (GGFNRSFGNEGSASSKLTALARTQSGG) shows a compositional bias: polar residues. The segment covering 265–274 (YKTKDEDSAS) has biased composition (basic and acidic residues). One can recognise a bHLH domain in the interval 310–360 (CATHPRSIAERVRRTKISERMRKLQDLVPNMDTQTNTADMLDLAVQYIKDL).

As to quaternary structure, homodimer.

It localises to the nucleus. This is Transcription factor bHLH122 (BHLH122) from Arabidopsis thaliana (Mouse-ear cress).